The chain runs to 227 residues: MGGKLSKKKKGYNVNDEKAKDKDKKAEGAGTEEEGTPKENEAQAAAETPEVKEGKEEKPEKDAQDTTKPEDKEGEKDAEAAKEDAPKAEPEPTEGAEGKPEPPKDAEQEPAAASGPSTGGDAPKASEAEAAEPAAPTKDDKSKEGGDATKTEAPAAPAAQETKSDGAPASDSKPSSTEAAPSSKETPAATEAPSSTPKAQAPAAPADEVKPAETPAANSDQTVAVKE.

Residues 1 to 11 are compositionally biased toward basic residues; the sequence is MGGKLSKKKKG. Positions 1–227 are disordered; the sequence is MGGKLSKKKK…NSDQTVAVKE (227 aa). The N-myristoyl glycine moiety is linked to residue glycine 2. The span at 15–27 shows a compositional bias: basic and acidic residues; sequence NDEKAKDKDKKAE. Residue lysine 25 forms a Glycyl lysine isopeptide (Lys-Gly) (interchain with G-Cter in SUMO2) linkage. Phosphothreonine is present on residues threonine 31 and threonine 36. Composition is skewed to basic and acidic residues over residues 49–107 and 137–150; these read PEVK…KDAE and TKDD…DATK. Glycyl lysine isopeptide (Lys-Gly) (interchain with G-Cter in SUMO2) cross-links involve residues lysine 87 and lysine 99. Residues 151 to 161 show a composition bias toward low complexity; it reads TEAPAAPAAQE. Lysine 163 is covalently cross-linked (Glycyl lysine isopeptide (Lys-Gly) (interchain with G-Cter in SUMO2)). 5 positions are modified to phosphoserine: serine 164, serine 170, serine 172, serine 176, and serine 195. Over residues 172 to 185 the composition is skewed to polar residues; the sequence is SKPSSTEAAPSSKE. Threonine 196 carries the phosphothreonine modification. A compositionally biased stretch (polar residues) spans 216–227; that stretch reads AANSDQTVAVKE. Serine 219 bears the Phosphoserine mark.

It belongs to the BASP1 family. As to expression, brain.

The protein resides in the cell membrane. It localises to the cell projection. It is found in the growth cone. The sequence is that of Brain acid soluble protein 1 (BASP1) from Bos taurus (Bovine).